A 104-amino-acid chain; its full sequence is Growth-regulated protein homolog (104 aa).

A signal peptide spans 1–31; the sequence is MAPAATAAAPRLLRAALLLLLLVAAGRRAAG. 2 disulfide bridges follow: C40/C66 and C42/C82.

This sequence belongs to the intercrine alpha (chemokine CxC) family.

The protein localises to the secreted. In terms of biological role, plays a role in monocyte adhesion to the endothelium. The sequence is that of Growth-regulated protein homolog from Oryctolagus cuniculus (Rabbit).